Reading from the N-terminus, the 296-residue chain is Phosphatidylserine decarboxylase proenzyme (296 aa).

Residues Asp-100, His-157, and Ser-263 each act as charge relay system; for autoendoproteolytic cleavage activity in the active site. The Schiff-base intermediate with substrate; via pyruvic acid; for decarboxylase activity role is filled by Ser-263. Position 263 is a pyruvic acid (Ser); by autocatalysis (Ser-263).

The protein belongs to the phosphatidylserine decarboxylase family. PSD-B subfamily. Prokaryotic type I sub-subfamily. Heterodimer of a large membrane-associated beta subunit and a small pyruvoyl-containing alpha subunit. The cofactor is pyruvate. In terms of processing, is synthesized initially as an inactive proenzyme. Formation of the active enzyme involves a self-maturation process in which the active site pyruvoyl group is generated from an internal serine residue via an autocatalytic post-translational modification. Two non-identical subunits are generated from the proenzyme in this reaction, and the pyruvate is formed at the N-terminus of the alpha chain, which is derived from the carboxyl end of the proenzyme. The autoendoproteolytic cleavage occurs by a canonical serine protease mechanism, in which the side chain hydroxyl group of the serine supplies its oxygen atom to form the C-terminus of the beta chain, while the remainder of the serine residue undergoes an oxidative deamination to produce ammonia and the pyruvoyl prosthetic group on the alpha chain. During this reaction, the Ser that is part of the protease active site of the proenzyme becomes the pyruvoyl prosthetic group, which constitutes an essential element of the active site of the mature decarboxylase.

It localises to the cell membrane. It carries out the reaction a 1,2-diacyl-sn-glycero-3-phospho-L-serine + H(+) = a 1,2-diacyl-sn-glycero-3-phosphoethanolamine + CO2. It participates in phospholipid metabolism; phosphatidylethanolamine biosynthesis; phosphatidylethanolamine from CDP-diacylglycerol: step 2/2. In terms of biological role, catalyzes the formation of phosphatidylethanolamine (PtdEtn) from phosphatidylserine (PtdSer). This chain is Phosphatidylserine decarboxylase proenzyme, found in Actinobacillus pleuropneumoniae serotype 7 (strain AP76).